The sequence spans 292 residues: Poly(U)-specific endoribonuclease-A (292 aa).

One can recognise an EndoU domain in the interval 8-285 (LNHELSKLFN…IGTAYPVLLS (278 aa)). Residues histidine 162, histidine 178, and lysine 224 contribute to the active site.

The protein belongs to the ENDOU family. Monomer. Mn(2+) serves as cofactor.

It localises to the nucleus. The enzyme catalyses uridylyl-uridylyl-ribonucleotide-RNA = a 3'-end uridylyl-2',3'-cyclophospho-uridine-RNA + a 5'-end dephospho-ribonucleoside-RNA. In terms of biological role, poly(U)-specific endoribonuclease involved in the processing of intron-encoded box C/D snoRNAs, such as U16 and U86. Releases products that have 2',3'-cyclic phosphate termini at the 3'-end. The sequence is that of Poly(U)-specific endoribonuclease-A (endou-a) from Xenopus laevis (African clawed frog).